Here is a 421-residue protein sequence, read N- to C-terminus: L-evernosamine nitrososynthase (421 aa).

Belongs to the acyl-CoA dehydrogenase family. In terms of assembly, homotetramer. FAD is required as a cofactor.

The enzyme catalyses dTDP-beta-L-evernosamine + 2 NADPH + 2 O2 + H(+) = dTDP-2,3,6-trideoxy-3-C-methyl-4-O-methyl-3-nitroso-beta-L-arabino-hexopyranose + 2 NADP(+) + 3 H2O. The catalysed reaction is dTDP-beta-L-evernosamine + NADPH + O2 = dTDP-N-hydroxy-beta-L-evernosamine + NADP(+) + H2O. It carries out the reaction dTDP-N-hydroxy-beta-L-evernosamine + NADPH + O2 + H(+) = dTDP-2,3,6-trideoxy-3-C-methyl-4-O-methyl-3-nitroso-beta-L-arabino-hexopyranose + NADP(+) + 2 H2O. It participates in antibiotic biosynthesis. Functionally, nitrososynthase involved in the biosynthesis of everninomicin, a broad spectrum orthosomycin antibiotic. Catalyzes the double-oxidation of TDP-L-evernosamine to TDP-L-evernitrosose. The enzyme first oxidizes the substrate to a transient hydroxylamino intermediate, which is then further oxidized to nitroso sugar. The nitroso group is probably spontaneously oxidized giving TDP-L-evernitrose. In vitro, catalyzes the double-oxidation of TDP-L-epi-vancosamine to TDP-L-epi-vancosonitrose. Can also use biosynthetic progenitors of TDP-L-epi-vancosamine, but progenitors solely undergo single-oxidation reactions and terminate in the hydroxylamine oxidation state. The sequence is that of L-evernosamine nitrososynthase from Micromonospora sp. (strain ATCC 39149 / NRRL 15099 / SCC 1413).